The primary structure comprises 1057 residues: Atrial natriuretic peptide receptor 1 (1057 aa).

An N-terminal signal peptide occupies residues 1 to 28 (MPGSRRVRPRLRALLLLPPLLLLRSGHA). Residues 29-469 (SDLTVAVVLP…CNQDHFSTLE (441 aa)) lie on the Extracellular side of the membrane. A glycan (N-linked (GlcNAc...) asparagine) is linked at asparagine 41. Positions 81, 113, and 114 each coordinate chloride. Disulfide bonds link cysteine 88–cysteine 114 and cysteine 192–cysteine 241. Residues asparagine 208, asparagine 334, asparagine 375, asparagine 382, and asparagine 423 are each glycosylated (N-linked (GlcNAc...) asparagine). Residues cysteine 451 and cysteine 460 are joined by a disulfide bond. A helical membrane pass occupies residues 470-490 (VLALVGSLSLVSFLIVSFFIY). Residues 491–1057 (RKMQLEKELV…LGERGCSTRG (567 aa)) are Cytoplasmic-facing. 2 positions are modified to phosphoserine: serine 515 and serine 525. Residues 524 to 801 (GSRLTLSGRG…QIRLALRKFN (278 aa)) form the Protein kinase domain. Phosphothreonine is present on threonine 528. 3 positions are modified to phosphoserine: serine 530, serine 534, and serine 538. Position 541 is a phosphothreonine (threonine 541). The 131-residue stretch at 872–1002 (TIYFSDIVGF…DTVNTASRME (131 aa)) folds into the Guanylate cyclase domain.

Belongs to the adenylyl cyclase class-4/guanylyl cyclase family. As to quaternary structure, homodimer. Phosphorylation of the protein kinase-like domain is required for full activation by ANP.

It localises to the membrane. The enzyme catalyses GTP = 3',5'-cyclic GMP + diphosphate. Receptor for the atrial natriuretic peptide NPPA/ANP and the brain natriuretic peptide NPPB/BNP which are potent vasoactive hormones playing a key role in cardiovascular homeostasis. Plays an essential role in the regulation of endothelial cell senescence and vascular aging. Upon activation by ANP or BNP, stimulates the production of cyclic guanosine monophosphate (cGMP) that promotes vascular tone and volume homeostasis by activation of protein kinase cGMP-dependent 1/PRKG1 and subsequently PRKAA1, thereby controlling blood pressure and maintaining cardiovascular homeostasis. This Mus musculus (Mouse) protein is Atrial natriuretic peptide receptor 1 (Npr1).